Consider the following 58-residue polypeptide: Large ribosomal subunit protein uL30 (58 aa).

Belongs to the universal ribosomal protein uL30 family. Part of the 50S ribosomal subunit.

The chain is Large ribosomal subunit protein uL30 from Desulfovibrio desulfuricans (strain ATCC 27774 / DSM 6949 / MB).